Here is a 322-residue protein sequence, read N- to C-terminus: tRNA-dihydrouridine(16) synthase (322 aa).

Residues 8–10 and Q69 contribute to the FMN site; that span reads PME. Residue C99 is the Proton donor of the active site. FMN contacts are provided by residues K140, 200–202, and 224–225; these read NGD and GR.

The protein belongs to the Dus family. DusC subfamily. It depends on FMN as a cofactor.

It carries out the reaction 5,6-dihydrouridine(16) in tRNA + NADP(+) = uridine(16) in tRNA + NADPH + H(+). The catalysed reaction is 5,6-dihydrouridine(16) in tRNA + NAD(+) = uridine(16) in tRNA + NADH + H(+). Functionally, catalyzes the synthesis of 5,6-dihydrouridine (D), a modified base found in the D-loop of most tRNAs, via the reduction of the C5-C6 double bond in target uridines. Specifically modifies U16 in tRNAs. The sequence is that of tRNA-dihydrouridine(16) synthase from Cupriavidus necator (strain ATCC 17699 / DSM 428 / KCTC 22496 / NCIMB 10442 / H16 / Stanier 337) (Ralstonia eutropha).